The following is a 26-amino-acid chain: 83 kDa hypersensitivity protein (26 aa).

Residues 1–26 (FTPEDFISAPRRGEAIPDPKGELAVF) form a disordered region. The span at 11–26 (RRGEAIPDPKGELAVF) shows a compositional bias: basic and acidic residues.

The polypeptide is 83 kDa hypersensitivity protein (Trichophyton tonsurans (Scalp ringworm fungus)).